The sequence spans 533 residues: MALKNVPFRSEVLAWNSDNLADYFRKLNYRDCEKAVKKYHIDGARFLNLTENDIQKFPKLRMPLLSKLSQDINKNEERRSIFTRKPQIPRFLEETESHEEDDGGWSSFEDDYESPNDDDPDGEDDGDYESPNEEEQALVDDAADYEPPPSNNEEALQSSILPPNSFHNTNSMYIDRPPTGKVSQQPPVPPLRPKPALPPLPTGRNHSPLSPPHPNHEEPSRSGNNKTAKLPAPSIDRSTKPPLDRSLAPLDREPFILGKKPPFSDKPSAPLGREHLPKIQKPPLPPAMDRHERNERLGPVTTRKPPVPRHGRGPDRRENDEDDVHQRPLPQPSLPSMSSNTFPSRSVQPSSKNTFPLAHMPGAFSESNIGFQQSASLPPYFSQGPGNRPPLRSEGRNLPLPVPNRPQPPSPGEEETPLDEEWYVSYITRPEAEAALRKINQDGTFLVRDSSKKTANNPYVLMVLYKDKVYNIQIRYQEESQVYLLGTGLRGKEDFLSVSDIIDYFRKMPLLLIDGKNRGSRYQCTLTHAAGCL.

The 67-residue stretch at 12–78 folds into the SAM domain; it reads VLAWNSDNLA…SQDINKNEER (67 aa). The residue at position 23 (Y23) is a Phosphotyrosine. Disordered stretches follow at residues 78-359 and 374-419; these read RRSI…PLAH and SASL…TPLD. Positions 94-144 are enriched in acidic residues; that stretch reads ETESHEEDDGGWSSFEDDYESPNDDDPDGEDDGDYESPNEEEQALVDDAAD. A compositionally biased stretch (polar residues) spans 151-172; it reads NNEEALQSSILPPNSFHNTNSM. Pro residues predominate over residues 186-201; sequence PPVPPLRPKPALPPLP. S207 and S210 each carry phosphoserine. Over residues 340-354 the composition is skewed to polar residues; that stretch reads NTFPSRSVQPSSKNT. Phosphoserine occurs at positions 376 and 410. Positions 400–411 are enriched in pro residues; sequence LPVPNRPQPPSP. Positions 422 to 530 constitute an SH2 domain; the sequence is WYVSYITRPE…RYQCTLTHAA (109 aa).

In terms of assembly, interacts with SLA. Interacts with CBLB. Interacts with GRB2. Interacts with SHB. Interacts with PRAM1. Interacts (via SH2 domain) with CD6 (via tyrosine phosphorylated C-terminus). Interacts with FYB1 and the phosphorylated form of FYB2. Interacts with 14-3-3 adapter/YWHAZ; this phosphorylation leads to YWHAZ proteolytic degradation. Interacts with VAV1; this interaction plays a role in TCR-mediated cytokine production. Interacts with AGER; this interaction plays an important role in AGER-mediated pro-inflammatory responses and cytokine release. Post-translationally, phosphorylated after T-cell receptor activation by ZAP70, ITK and TXK, which leads to the up-regulation of Th1 preferred cytokine IL-2. SYK-dependent phosphorylation is required for recruitment of PI3K signaling components. Highly expressed in spleen, thymus, and peripheral blood leukocytes.

It is found in the cytoplasm. In terms of biological role, adapter protein primarily involved in signaling pathways within T-cells, as well as other immune cells such as platelets, mast cells, and natural killer (NK) cells. Plays a crucial role for transducing signal from the T-cell receptor (TCR) after antigen recognition leading to T-cell activation. Mechanistically, once phosphorylated by the kinase ZAP70, mediates interactions with the guanine-nucleotide exchange factor VAV1, the adapter protein NCK and the kinase ITK. In turn, stimulates the activation of PKC-theta/PRKCQ and NF-kappa-B transcriptional activity in response to CD3 and CD28 costimulation. Also plays an essential role in AGER-induced signaling pathways including p38 MAPK and ERK1/2 activation leading to cytokine release and pro-inflammatory responses. This is Lymphocyte cytosolic protein 2 (Lcp2) from Mus musculus (Mouse).